Consider the following 302-residue polypeptide: Phosphatidylglycerol--prolipoprotein diacylglyceryl transferase (302 aa).

The next 3 membrane-spanning stretches (helical) occupy residues 26–46, 67–87, and 108–128; these read WYAL…VMLV, LVLW…VLFY, and IWEG…AIVL. Arginine 156 serves as a coordination point for a 1,2-diacyl-sn-glycero-3-phospho-(1'-sn-glycerol). The next 2 helical transmembrane spans lie at 231-251 and 263-283; these read GALV…LEGV and LGLT…VWLL.

The protein belongs to the Lgt family.

It is found in the cell inner membrane. The catalysed reaction is L-cysteinyl-[prolipoprotein] + a 1,2-diacyl-sn-glycero-3-phospho-(1'-sn-glycerol) = an S-1,2-diacyl-sn-glyceryl-L-cysteinyl-[prolipoprotein] + sn-glycerol 1-phosphate + H(+). The protein operates within protein modification; lipoprotein biosynthesis (diacylglyceryl transfer). Its function is as follows. Catalyzes the transfer of the diacylglyceryl group from phosphatidylglycerol to the sulfhydryl group of the N-terminal cysteine of a prolipoprotein, the first step in the formation of mature lipoproteins. The protein is Phosphatidylglycerol--prolipoprotein diacylglyceryl transferase of Caulobacter sp. (strain K31).